The following is an 80-amino-acid chain: Putative membrane protein insertion efficiency factor (80 aa).

It belongs to the UPF0161 family.

It is found in the cell inner membrane. Functionally, could be involved in insertion of integral membrane proteins into the membrane. The sequence is that of Putative membrane protein insertion efficiency factor from Syntrophobacter fumaroxidans (strain DSM 10017 / MPOB).